Consider the following 74-residue polypeptide: Transcription attenuation protein MtrB (74 aa).

Belongs to the MtrB family. In terms of assembly, oligomer of 11 identical subunits arranged in doughnut-like structure.

Required for transcription attenuation control in the Trp operon. This trans-acting factor seems to recognize a 10 bases nucleotide sequence in the Trp leader transcript causing transcription termination. Binds the leader RNA only in presence of L-tryptophan. The sequence is that of Transcription attenuation protein MtrB from Geobacillus sp. (strain WCH70).